The following is a 172-amino-acid chain: R-phycocyanin beta subunit (172 aa).

Position 72 is an N4-methylasparagine (Asn-72). (2R,3E)-phycocyanobilin is bound at residue Cys-82. Cys-153 provides a ligand contact to (2R,3E)-phycoerythrobilin.

The protein belongs to the phycobiliprotein family. Heterodimer of an alpha and a beta subunit, which further assembles into trimers and the trimers into hexamers. Contains two covalently linked bilin chromophores.

The protein resides in the cellular thylakoid membrane. Its function is as follows. Light-harvesting photosynthetic bile pigment-protein from the phycobiliprotein complex (phycobilisome, PBS). Phycocyanin is the major phycobiliprotein in the PBS rod. The polypeptide is R-phycocyanin beta subunit (rpcB) (Synechococcus sp. (strain WH7803)).